We begin with the raw amino-acid sequence, 747 residues long: Fibroblast growth factor receptor (747 aa).

A signal peptide spans 1–24 (MIQLQNTFIFIALTIFTSASTTSL). Residues 25–288 (KNETKPLNTI…TEEIPQDTHY (264 aa)) are Extracellular-facing. N-linked (GlcNAc...) asparagine glycans are attached at residues N26, N42, and N63. The tract at residues 47–68 (EEDLFDTNGAPKSDTVNASTTT) is disordered. Ig-like C2-type domains lie at 74–167 (PRWV…YELD) and 175–267 (PPVL…AWLT). C99 and C151 form a disulfide bridge. 5 N-linked (GlcNAc...) asparagine glycosylation sites follow: N161, N185, N217, N227, and N240. An intrachain disulfide couples C198 to C251. Residues 289–309 (LIYIFGVVCFIILLAFIVYMC) form a helical membrane-spanning segment. The Cytoplasmic segment spans residues 310–747 (NSRYQNKDPP…NGHARMQSDV (438 aa)). The Protein kinase domain occupies 377-660 (ILLHERIDEG…QLVEDLDRML (284 aa)). ATP contacts are provided by residues 383 to 391 (IDEGFFGQV) and K412. D525 (proton acceptor) is an active-site residue. Phosphotyrosine; by autocatalysis is present on Y556. Residues 679–731 (YLPSDVDSNEDTESRDSANATGEDSDSVFEPIDGHGAHAYEVDEAGPLLNPQP) form a disordered region. Over residues 710 to 719 (IDGHGAHAYE) the composition is skewed to basic and acidic residues.

It belongs to the protein kinase superfamily. Tyr protein kinase family. Fibroblast growth factor receptor subfamily.

The protein localises to the membrane. The enzyme catalyses L-tyrosyl-[protein] + ATP = O-phospho-L-tyrosyl-[protein] + ADP + H(+). Functionally, receptor for basic fibroblast growth factor. The polypeptide is Fibroblast growth factor receptor (FGFR) (Ciona intestinalis (Transparent sea squirt)).